Reading from the N-terminus, the 213-residue chain is Chloramphenicol acetyltransferase 2 (213 aa).

Residue histidine 189 is the Proton acceptor of the active site.

The protein belongs to the chloramphenicol acetyltransferase family. As to quaternary structure, homotrimer.

The enzyme catalyses chloramphenicol + acetyl-CoA = chloramphenicol 3-acetate + CoA. Functionally, this enzyme is an effector of chloramphenicol resistance in bacteria. This Escherichia coli protein is Chloramphenicol acetyltransferase 2 (cmlA).